The following is a 784-amino-acid chain: E3 UFM1-protein ligase 1 homolog (784 aa).

The span at 398 to 414 (QEVDHGVMEEEKADKRE) shows a compositional bias: basic and acidic residues. The segment at 398–472 (QEVDHGVMEE…ASNKKGGKDP (75 aa)) is disordered.

The protein belongs to the UFL1 family.

In terms of biological role, E3 UFM1-protein ligase that mediates ufmylation of target proteins. The protein is E3 UFM1-protein ligase 1 homolog of Anopheles gambiae (African malaria mosquito).